Consider the following 242-residue polypeptide: Transcriptional activator protein RaiR (242 aa).

The HTH luxR-type domain maps to 177-242 (KVADLPRLSR…EQLLGPRRSN (66 aa)). A DNA-binding region (H-T-H motif) is located at residues 201-220 (AKQICARLSISVSAVQLYLA).

This sequence belongs to the autoinducer-regulated transcriptional regulatory protein family.

This Rhizobium etli protein is Transcriptional activator protein RaiR (raiR).